A 430-amino-acid polypeptide reads, in one-letter code: Serine--tRNA ligase (430 aa).

Position 237–239 (237–239 (TAE)) interacts with L-serine. ATP is bound at residue 268-270 (RSE). An L-serine-binding site is contributed by glutamate 291. ATP is bound at residue 355-358 (EISS). Residue serine 391 participates in L-serine binding.

This sequence belongs to the class-II aminoacyl-tRNA synthetase family. Type-1 seryl-tRNA synthetase subfamily. As to quaternary structure, homodimer. The tRNA molecule binds across the dimer.

It localises to the cytoplasm. It carries out the reaction tRNA(Ser) + L-serine + ATP = L-seryl-tRNA(Ser) + AMP + diphosphate + H(+). It catalyses the reaction tRNA(Sec) + L-serine + ATP = L-seryl-tRNA(Sec) + AMP + diphosphate + H(+). The protein operates within aminoacyl-tRNA biosynthesis; selenocysteinyl-tRNA(Sec) biosynthesis; L-seryl-tRNA(Sec) from L-serine and tRNA(Sec): step 1/1. Catalyzes the attachment of serine to tRNA(Ser). Is also able to aminoacylate tRNA(Sec) with serine, to form the misacylated tRNA L-seryl-tRNA(Sec), which will be further converted into selenocysteinyl-tRNA(Sec). The polypeptide is Serine--tRNA ligase (Citrobacter koseri (strain ATCC BAA-895 / CDC 4225-83 / SGSC4696)).